A 301-amino-acid polypeptide reads, in one-letter code: N-acetylmuramic acid 6-phosphate etherase (301 aa).

The 164-residue stretch at 57–220 (ITEAFKKGGR…TTGAMIRSGK (164 aa)) folds into the SIS domain. The Proton donor role is filled by E85. E116 is an active-site residue.

The protein belongs to the GCKR-like family. MurNAc-6-P etherase subfamily. As to quaternary structure, homodimer.

The catalysed reaction is N-acetyl-D-muramate 6-phosphate + H2O = N-acetyl-D-glucosamine 6-phosphate + (R)-lactate. It participates in amino-sugar metabolism; 1,6-anhydro-N-acetylmuramate degradation. It functions in the pathway amino-sugar metabolism; N-acetylmuramate degradation. Its pathway is cell wall biogenesis; peptidoglycan recycling. Specifically catalyzes the cleavage of the D-lactyl ether substituent of MurNAc 6-phosphate, producing GlcNAc 6-phosphate and D-lactate. Together with AnmK, is also required for the utilization of anhydro-N-acetylmuramic acid (anhMurNAc) either imported from the medium or derived from its own cell wall murein, and thus plays a role in cell wall recycling. The protein is N-acetylmuramic acid 6-phosphate etherase of Photobacterium profundum (strain SS9).